The chain runs to 203 residues: Cytochrome c oxidase assembly protein CtaG (203 aa).

At 1–19 (MDAGKAERRAGNGRRTDGR) the chain is on the cytoplasmic side. A helical; Signal-anchor for type II membrane protein membrane pass occupies residues 20 to 42 (RHLVVAAACAAFIAAMVGVTYAS). The Periplasmic segment spans residues 43-203 (VPLYAMFCAL…AAARASGTGG (161 aa)).

Belongs to the COX11/CtaG family.

It is found in the cell inner membrane. Its function is as follows. Exerts its effect at some terminal stage of cytochrome c oxidase synthesis, probably by being involved in the insertion of the copper B into subunit I. This Xanthobacter autotrophicus (strain ATCC BAA-1158 / Py2) protein is Cytochrome c oxidase assembly protein CtaG.